Consider the following 125-residue polypeptide: Holo-[acyl-carrier-protein] synthase (125 aa).

D8 and E56 together coordinate Mg(2+).

This sequence belongs to the P-Pant transferase superfamily. AcpS family. Mg(2+) is required as a cofactor.

It is found in the cytoplasm. The enzyme catalyses apo-[ACP] + CoA = holo-[ACP] + adenosine 3',5'-bisphosphate + H(+). Its function is as follows. Transfers the 4'-phosphopantetheine moiety from coenzyme A to a Ser of acyl-carrier-protein. In Borrelia hermsii (strain HS1 / DAH), this protein is Holo-[acyl-carrier-protein] synthase.